Here is a 362-residue protein sequence, read N- to C-terminus: Phosphoserine aminotransferase (362 aa).

L-glutamate is bound at residue arginine 42. Residues 76-77 (AR), tryptophan 102, threonine 153, aspartate 174, and glutamine 197 each bind pyridoxal 5'-phosphate. Lysine 198 carries the post-translational modification N6-(pyridoxal phosphate)lysine. 239–240 (NT) is a pyridoxal 5'-phosphate binding site.

This sequence belongs to the class-V pyridoxal-phosphate-dependent aminotransferase family. SerC subfamily. Homodimer. Pyridoxal 5'-phosphate serves as cofactor.

The protein resides in the cytoplasm. It catalyses the reaction O-phospho-L-serine + 2-oxoglutarate = 3-phosphooxypyruvate + L-glutamate. It carries out the reaction 4-(phosphooxy)-L-threonine + 2-oxoglutarate = (R)-3-hydroxy-2-oxo-4-phosphooxybutanoate + L-glutamate. The protein operates within amino-acid biosynthesis; L-serine biosynthesis; L-serine from 3-phospho-D-glycerate: step 2/3. It functions in the pathway cofactor biosynthesis; pyridoxine 5'-phosphate biosynthesis; pyridoxine 5'-phosphate from D-erythrose 4-phosphate: step 3/5. Catalyzes the reversible conversion of 3-phosphohydroxypyruvate to phosphoserine and of 3-hydroxy-2-oxo-4-phosphonooxybutanoate to phosphohydroxythreonine. This Proteus mirabilis (strain HI4320) protein is Phosphoserine aminotransferase.